Consider the following 1278-residue polypeptide: Sterol regulatory element-binding protein cleavage-activating protein (1278 aa).

The Cytoplasmic segment spans residues 1-18 (MTLTERLREKISQAFYNH). The helical transmembrane segment at 19–39 (GLFCASYPIPIILFTGLCILA) threads the bilayer. Residues 40–279 (CCYPLLKLPL…SLVHVHFKEE (240 aa)) lie on the Lumenal side of the membrane. The segment at 46-284 (KLPLPGTGPV…HFKEEIGIAE (239 aa)) is loop-1. Positions 60 to 80 (PVKDYSPPPLTSDHKPGEPNE) are disordered. N-linked (GlcNAc...) asparagine glycosylation is present at Asn263. A helical membrane pass occupies residues 280–300 (IGIAELIPLVTTYIILFAYIY). The 159-residue stretch at 284–442 (ELIPLVTTYI…MLFFTTVLSI (159 aa)) folds into the SSD domain. Residues 301 to 312 (FSTRKIDMVKSK) are Cytoplasmic-facing. A helical transmembrane segment spans residues 313–333 (WGLALAAVVTVLSSLLMSVGL). Topologically, residues 334 to 344 (CTLFGLTPTLN) are lumenal. A helical membrane pass occupies residues 345–365 (GGEIFPYLVVVIGLENVLVLT). The Cytoplasmic portion of the chain corresponds to 366–401 (KSVVSTPVDLEVKLRIAQGLSSESWSIMKNMATELG). A helical membrane pass occupies residues 402–422 (IVLIGYFTLVPAIQEFCLFAV). A topological domain (lumenal) is located at residue Val423. Residues 424–444 (GLVSDFFLQMLFFTTVLSIDI) traverse the membrane as a helical segment. Over 445–518 (RRMELADLNK…FLARTRLAQR (74 aa)) the chain is Cytoplasmic. The ER export signal signature appears at 447–452 (MELADL). Glycyl lysine isopeptide (Lys-Gly) (interchain with G-Cter in ubiquitin) cross-links involve residues Lys454 and Lys466. A helical transmembrane segment spans residues 519–539 (LIMAGTVVWIGILVYTDPAGL). Residues 535–710 (DPAGLRTYLA…QAQRDLTLYK (176 aa)) are loop-7. The Lumenal portion of the chain corresponds to 540–707 (RTYLAAQVTE…GTAQAQRDLT (168 aa)). Residues 581-618 (PPDASKLPENQTLPGEPPEPGGLAEGVHDSPAPEVTWG) form a disordered region. Asn590 and Asn641 each carry an N-linked (GlcNAc...) asparagine glycan. A disordered region spans residues 668–696 (EGRHPQDGRSAWPPPRPGQGGLWEAGPKG). Residues 708 to 728 (LYKVAALGLASGIVLVLLLLC) traverse the membrane as a helical segment. Residues 729–1278 (LYRVLCPRNY…YVPSVLEKLD (550 aa)) lie on the Cytoplasmic side of the membrane. The tract at residues 731–1278 (RVLCPRNYGQ…YVPSVLEKLD (548 aa)) is interaction with SREBF2. The stretch at 771–811 (VLRGHLMDIECLASDGMLLVSCCLAGHVCVWDAQTGDCLTR) is one WD 1 repeat. Phosphoserine occurs at positions 821, 837, 850, 905, and 935. Residues 834-904 (ERLSDGGKGG…RYRAGRRAQD (71 aa)) are disordered. 2 WD repeats span residues 951–1001 (PPEK…LRCS) and 1004–1041 (EVSS…ALSP). Arg1050 is subject to Omega-N-methylarginine. WD repeat units follow at residues 1076-1113 (AHQK…CLFT), 1116-1154 (GHSG…RVSH), 1157-1194 (AHRG…KLYS), and 1196-1234 (QQDL…LLQT).

Belongs to the WD repeat SCAP family. As to quaternary structure, membrane region forms a homotetramer. Component of the SCAP-SREBP complex (composed of SCAP and SREBF1/SREBP1 or SREBF2/SREBP2); interacts with SREBF1/SREBP1 or SREBF2/SREBP2 through its C-terminal cytoplasmic domain. Forms a ternary complex with INSIG1 or INSIG2 through its transmembrane domains at high sterol concentrations. Interacts with PAQR3; the interaction anchors the SCAP-SREBP complex to the Golgi apparatus in low cholesterol conditions. Interacts with the SEC23-SEC24 complex in a SAR1-GTP-dependent manner through an ER export signal in its third cytoplasmic loop. Interacts with RNF139; the interaction inhibits the interaction of SCAP with SEC24B and hampering the ER to Golgi transport of the SCAP-SREBP complex. Interacts with SPRING1. Post-translationally, ubiquitinated at Lys-454 and Lys-466. RNF145 triggers ubiquitination of SCAP, likely inhibiting SCAP-SREBP complex transport to the Golgi apparatus and the subsequent processing/maturation of SREBF2/SREBP2.

It localises to the endoplasmic reticulum membrane. Its subcellular location is the golgi apparatus membrane. The protein localises to the cytoplasmic vesicle. The protein resides in the COPII-coated vesicle membrane. Escort protein required for cholesterol as well as lipid homeostasis. Regulates export of the SCAP-SREBP complex from the endoplasmic reticulum to the Golgi upon low cholesterol, thereby regulating the processing of sterol regulatory element-binding proteins (SREBPs) SREBF1/SREBP1 and SREBF2/SREBP2. At high sterol concentrations, formation of a ternary complex with INSIG (INSIG1 or INSIG2) leads to mask the ER export signal in SCAP, promoting retention of the complex in the endoplasmic reticulum. Low sterol concentrations trigger release of INSIG, a conformational change in the SSD domain of SCAP, unmasking of the ER export signal, promoting recruitment into COPII-coated vesicles and transport of the SCAP-SREBP to the Golgi: in the Golgi, SREBPs are then processed, releasing the transcription factor fragment of SREBPs from the membrane, its import into the nucleus and up-regulation of LDLR, INSIG1 and the mevalonate pathway. Binds cholesterol via its SSD domain. In Bos taurus (Bovine), this protein is Sterol regulatory element-binding protein cleavage-activating protein.